We begin with the raw amino-acid sequence, 358 residues long: 4-hydroxy-3-methylbut-2-en-1-yl diphosphate synthase (flavodoxin) (358 aa).

[4Fe-4S] cluster contacts are provided by cysteine 265, cysteine 268, cysteine 300, and glutamate 307.

It belongs to the IspG family. Requires [4Fe-4S] cluster as cofactor.

It catalyses the reaction (2E)-4-hydroxy-3-methylbut-2-enyl diphosphate + oxidized [flavodoxin] + H2O + 2 H(+) = 2-C-methyl-D-erythritol 2,4-cyclic diphosphate + reduced [flavodoxin]. It functions in the pathway isoprenoid biosynthesis; isopentenyl diphosphate biosynthesis via DXP pathway; isopentenyl diphosphate from 1-deoxy-D-xylulose 5-phosphate: step 5/6. In terms of biological role, converts 2C-methyl-D-erythritol 2,4-cyclodiphosphate (ME-2,4cPP) into 1-hydroxy-2-methyl-2-(E)-butenyl 4-diphosphate. In Maridesulfovibrio salexigens (strain ATCC 14822 / DSM 2638 / NCIMB 8403 / VKM B-1763) (Desulfovibrio salexigens), this protein is 4-hydroxy-3-methylbut-2-en-1-yl diphosphate synthase (flavodoxin).